Consider the following 421-residue polypeptide: Ubiquitin-like modifier-activating enzyme 5 (421 aa).

The ATP site is built by Gly-89, Asp-110, Lys-133, Asn-156, and Asn-191. Zn(2+) contacts are provided by Cys-233 and Cys-236. Cys-257 serves as the catalytic Glycyl thioester intermediate. Zn(2+)-binding residues include Cys-310 and Cys-315.

The protein belongs to the ubiquitin-activating E1 family. UBA5 subfamily.

E1-like enzyme which activates UFM1. The sequence is that of Ubiquitin-like modifier-activating enzyme 5 from Oryza sativa subsp. japonica (Rice).